The sequence spans 468 residues: 6-phosphogluconate dehydrogenase, decarboxylating (468 aa).

Residues 10–15 (GMAVMG), 33–35 (NRS), 74–76 (VKA), and asparagine 102 each bind NADP(+). Substrate is bound by residues asparagine 102 and 128 to 130 (SGG). The active-site Proton acceptor is the lysine 183. Residue 186 to 187 (HN) participates in substrate binding. Glutamate 190 acts as the Proton donor in catalysis. Positions 191, 260, 287, 445, and 451 each coordinate substrate.

This sequence belongs to the 6-phosphogluconate dehydrogenase family. In terms of assembly, homodimer.

The enzyme catalyses 6-phospho-D-gluconate + NADP(+) = D-ribulose 5-phosphate + CO2 + NADPH. The protein operates within carbohydrate degradation; pentose phosphate pathway; D-ribulose 5-phosphate from D-glucose 6-phosphate (oxidative stage): step 3/3. Its function is as follows. Catalyzes the oxidative decarboxylation of 6-phosphogluconate to ribulose 5-phosphate and CO(2), with concomitant reduction of NADP to NADPH. The sequence is that of 6-phosphogluconate dehydrogenase, decarboxylating (gnd) from Salmonella typhimurium (strain LT2 / SGSC1412 / ATCC 700720).